A 792-amino-acid polypeptide reads, in one-letter code: MLPAGEIGASPAAPCCSESGDERKNLEEKSDINVTVLIGSKQVSEGTDNGDLPSYVSAFIEKEVGNDLKSLKKLDKLIEQRTVSKMQLEEQVLTISSEIPKRIRSALKNAEESKQFLNQFLEQETHLFSAINSHLLTAQPWMDDLGTMISQIEEIERHLAYLKWISQIEELSDNIQQYLMTNNVPEAASTLVSMAELDIKLQESSCTHLLGFMRATVKFWHKILKDKLTSDFEEILAQLHWPFIAPPQSQTVGLSRPASAPEIYSYLETLFCQLLKLQTSDELLTEPKQLPEKYSLPASPSVILPIQVMLTPLQKRFRYHFRGNRQTNVLSKPEWYLAQVLMWIGNHTEFLDEKIQPILDKVGSLVNARLEFSRGLMMLVLEKLATDIPCLLYDDNLFCHLVDEVLLFERELHSVHGYPGTFASCMHILSEETCFQRWLTVERKFALQKMDSMLSSEAAWVSQYKDITDVDEMKVPDCAETFMTLLLVITDRYKNLPTASRKLQFLELQKDLVDDFRIRLTQVMKEETRASLGFRYCAILNAVNYISTVLADWADNVFFLQLQQAALEVFAENNTLSKLQLGQLASMESSVFDDMINLLERLKHDMLTRQVDHVFREVKDAAKLYKKERWLSLPSQSEQAVMSLSSSACPLLLTLRDHLLQLEQQLCFSLFKIFWQMLVEKLDVYIYQEIILANHFNEGGAAQLQFDMTRNLFPLFSHYCKRPENYFKHIKEACIVLNLNVGSALLLKDVLQSASGQLPATAALNEVGIYKLAQQDVEILLNLRTNWPNTGK.

A disordered region spans residues M1 to E22. Positions I103 to E124 form a coiled coil. An RINT1/TIP20 domain is found at W220–K792.

Belongs to the RINT1 family. In terms of assembly, component of the NRZ complex composed of NBAS, ZW10 and RINT1/TIP20L; NRZ associates with SNAREs STX18, USE1L, BNIP1/SEC20L and SEC22B (the assembly has been described as syntaxin 18 complex). Interacts directly with BNIP1/SEC20L and ZW10. Interacts with UVRAG. Interacts with RAD50 during late S and G2/M phases. Interacts with RBL2, preferentially with the active, hypophosphorylated form.

The protein resides in the cytoplasm. It is found in the endoplasmic reticulum membrane. Involved in regulation of membrane traffic between the Golgi and the endoplasmic reticulum (ER); the function is proposed to depend on its association in the NRZ complex which is believed to play a role in SNARE assembly at the ER. May play a role in cell cycle checkpoint control. Essential for telomere length control. This chain is RAD50-interacting protein 1 (RINT1), found in Homo sapiens (Human).